The sequence spans 51 residues: Large ribosomal subunit protein bL33 (51 aa).

This sequence belongs to the bacterial ribosomal protein bL33 family.

This is Large ribosomal subunit protein bL33 from Hahella chejuensis (strain KCTC 2396).